Here is a 340-residue protein sequence, read N- to C-terminus: Cyclic GMP-AMP synthase-like receptor 3 (340 aa).

ATP-binding positions include Ser62 and Glu74 to Asp76. The Mg(2+) site is built by Glu74, Asp76, and Asp177. ATP-binding positions include Lys241 and Ser255 to Lys259. Residues Asp267 and Asp270 each contribute to the Mn(2+) site.

This sequence belongs to the mab-21 family. The cofactor is Mg(2+). It depends on Mn(2+) as a cofactor.

It catalyses the reaction 2 ATP = 3',3'-c-di-AMP + 2 diphosphate. In terms of biological role, nucleotidyltransferase that catalyzes the formation of cyclic di-AMP (3',3'-c-di-AMP) from 2 molecules of ATP and plays a key role in innate immunity. Acts as a key sensor of double-stranded RNA (dsRNA), the presence of dsRNA in the cytoplasm being a danger signal that triggers the immune responses. Directly binds dsRNA, activating the nucleotidyltransferase activity, leading to synthesis of 3',3'-c-di-AMP, a second messenger that binds to and activates Sting, thereby triggering the immune response via activation of the NF-kappa-B transcription factor. The chain is Cyclic GMP-AMP synthase-like receptor 3 from Stylophora pistillata (Smooth cauliflower coral).